Here is a 313-residue protein sequence, read N- to C-terminus: Olfactory receptor 2B6 (313 aa).

The Extracellular portion of the chain corresponds to 1–25 (MNWVNDSIIQEFILLGFSDRPWLEF). Asparagine 5 carries an N-linked (GlcNAc...) asparagine glycan. A helical membrane pass occupies residues 26-49 (PLLVVFLISYTVTIFGNLTIILVS). The Cytoplasmic portion of the chain corresponds to 50–57 (RLDTKLHT). The chain crosses the membrane as a helical span at residues 58–79 (PMYFFLTNLSLLDLCYTTCTVP). Over 80 to 100 (QMLVNLCSIRKVISYRGCVAQ) the chain is Extracellular. Cysteine 97 and cysteine 189 are disulfide-bonded. A helical transmembrane segment spans residues 101-120 (LFIFLALGATEYLLLAVMSF). Topologically, residues 121–139 (DRFVAICRPLHYSVIMHQR) are cytoplasmic. The chain crosses the membrane as a helical span at residues 140–158 (LCLQLAAASWVTGFSNSVW). Residues 159–195 (LSTLTLQLPLCDPYVIDHFLCEVPALLKLSCVETTAN) lie on the Extracellular side of the membrane. A helical membrane pass occupies residues 196–219 (EAELFLVSELFHLIPLTLILISYA). The Cytoplasmic segment spans residues 220-236 (FIVRAVLRIQSAEGRQK). Residues 237–259 (AFGTCGSHLIVVSLFYSTAVSVY) traverse the membrane as a helical segment. Over 260–272 (LQPPSPSSKDQGK) the chain is Extracellular. Residues 273-292 (MVSLFYGIIAPMLNPLIYTL) traverse the membrane as a helical segment. The Cytoplasmic portion of the chain corresponds to 293–313 (RNKEVKEGFKRLVARVFLIKK).

This sequence belongs to the G-protein coupled receptor 1 family.

It localises to the cell membrane. In terms of biological role, odorant receptor. This chain is Olfactory receptor 2B6, found in Homo sapiens (Human).